Here is a 322-residue protein sequence, read N- to C-terminus: Mas-related G-protein coupled receptor member X3 (322 aa).

Residues 1-31 (MDSTIPVLGTELTPINGREETPCYKQTLSFT) are Extracellular-facing. Residues 32-52 (GLTCIVSLVALTGNAVVLWLL) form a helical membrane-spanning segment. Topologically, residues 53–60 (GCRMRRNA) are cytoplasmic. Residues 61 to 81 (VSIYILNLVAADFLFLSGHII) traverse the membrane as a helical segment. At 82–96 (CSPLRLINIRHPISK) the chain is on the extracellular side. A helical transmembrane segment spans residues 97-117 (ILSPVMTFPYFIGLSMLSAIS). The Cytoplasmic segment spans residues 118–140 (TERCLSILWPIWYHCRRPRYLSS). The chain crosses the membrane as a helical span at residues 141–161 (VMCVLLWALSLLRSILEWMFC). At 162–177 (DFLFSGANSVWCETSD) the chain is on the extracellular side. The helical transmembrane segment at 178–198 (FITIAWLVFLCVVLCGSSLVL) threads the bilayer. The Cytoplasmic portion of the chain corresponds to 199-213 (LVRILCGSRKMPLTR). Residues 214 to 234 (LYVTILLTVLVFLLCGLPFGI) traverse the membrane as a helical segment. At 235–254 (QWALFSRIHLDWKVLFCHVH) the chain is on the extracellular side. Residues 255 to 275 (LVSIFLSALNSSANPIIYFFV) form a helical membrane-spanning segment. The Cytoplasmic segment spans residues 276–322 (GSFRQRQNRQNLKLVLQRALQDTPEVDEGGGWLPQETLELSGSRLEQ).

The protein belongs to the G-protein coupled receptor 1 family. Mas subfamily. In terms of tissue distribution, uniquely localized in a subset of small dorsal root and trigeminal sensory neurons.

It localises to the cell membrane. Its function is as follows. Orphan receptor. Probably involved in the function of nociceptive neurons. May regulate nociceptor function and/or development, including the sensation or modulation of pain. Potently activated by enkephalins. This chain is Mas-related G-protein coupled receptor member X3 (MRGPRX3), found in Homo sapiens (Human).